The primary structure comprises 368 residues: MSETAKKVIVGMSGGVDSSVSAWLLQQQGYQVEGLFMKNWEEDDGEEYCTAAADLADAQAVCDKLGIELHTVNFAAEYWNNVFELFLAEYKAGRTPNPDILCNKEIKFKAFLEFAAEDLGADYIATGHYVRRADVDGKSRLLRGLDSNKDQSYFLYTLSHEQIAQSLFPVGELEKPQVRKIAEDLGLVTAKKKDSTGICFIGERKFREFLGRYLPAQPGKIITVDGDEIGEHQGLMYHTLGQRKGLGIGGTKEGTEEPWYVVDKDVENNILVVAQGHEHPRLMSVGLIAQQLHWVDREPFTGTMRCTVKTRYRQTDIPCTVKALDDDRIEVIFDEPVAAVTPGQSAVFYNGEVCLGGGIIEQRLPLPV.

ATP-binding positions include 11–18 (GMSGGVDS) and Met-37. Residues 97–99 (NPD) form an interaction with target base in tRNA region. The active-site Nucleophile is Cys-102. The cysteines at positions 102 and 199 are disulfide-linked. Gly-127 is an ATP binding site. An interaction with tRNA region spans residues 149 to 151 (KDQ). Cys-199 functions as the Cysteine persulfide intermediate in the catalytic mechanism. The interval 311–312 (RY) is interaction with tRNA.

This sequence belongs to the MnmA/TRMU family. Interacts with TusE.

It localises to the cytoplasm. The enzyme catalyses S-sulfanyl-L-cysteinyl-[protein] + uridine(34) in tRNA + AH2 + ATP = 2-thiouridine(34) in tRNA + L-cysteinyl-[protein] + A + AMP + diphosphate + H(+). Its function is as follows. Catalyzes the 2-thiolation of uridine at the wobble position (U34) of tRNA(Lys), tRNA(Glu) and tRNA(Gln), leading to the formation of s(2)U34, the first step of tRNA-mnm(5)s(2)U34 synthesis. Sulfur is provided by IscS, via a sulfur-relay system. Binds ATP and its substrate tRNAs. The polypeptide is tRNA-specific 2-thiouridylase MnmA (Shigella boydii serotype 18 (strain CDC 3083-94 / BS512)).